A 370-amino-acid polypeptide reads, in one-letter code: Chloromuconate cycloisomerase (370 aa).

Lys-165 (proton acceptor) is an active-site residue. Residues Asp-194, Glu-220, and Asp-245 each contribute to the Mn(2+) site. Catalysis depends on Glu-323, which acts as the Proton donor.

Belongs to the mandelate racemase/muconate lactonizing enzyme family. Mn(2+) is required as a cofactor.

It catalyses the reaction 2-[(2R)-2-chloro-2,5-dihydro-5-oxofuryl]acetate = 3-chloro-cis,cis-muconate + H(+). It participates in aromatic compound metabolism; 3-chlorocatechol degradation. Its function is as follows. Highly active toward chlorinated substrates but retains diminished activity toward the non-chlorinated substrates. In Pseudomonas putida (Arthrobacter siderocapsulatus), this protein is Chloromuconate cycloisomerase (clcB).